The primary structure comprises 326 residues: uncharacterized protein (326 aa).

Serine 132 lines the substrate pocket. Tyrosine 157 functions as the Proton acceptor in the catalytic mechanism.

Belongs to the NAD(P)-dependent epimerase/dehydratase family. dTDP-glucose dehydratase subfamily.

This is an uncharacterized protein from Methanocaldococcus jannaschii (strain ATCC 43067 / DSM 2661 / JAL-1 / JCM 10045 / NBRC 100440) (Methanococcus jannaschii).